Reading from the N-terminus, the 323-residue chain is tRNA U34 carboxymethyltransferase (323 aa).

Carboxy-S-adenosyl-L-methionine contacts are provided by residues K91, W105, K110, G130, 180-181 (IE), M196, Y200, and R315.

Belongs to the class I-like SAM-binding methyltransferase superfamily. CmoB family. In terms of assembly, homotetramer.

It catalyses the reaction carboxy-S-adenosyl-L-methionine + 5-hydroxyuridine(34) in tRNA = 5-carboxymethoxyuridine(34) in tRNA + S-adenosyl-L-homocysteine + H(+). In terms of biological role, catalyzes carboxymethyl transfer from carboxy-S-adenosyl-L-methionine (Cx-SAM) to 5-hydroxyuridine (ho5U) to form 5-carboxymethoxyuridine (cmo5U) at position 34 in tRNAs. The chain is tRNA U34 carboxymethyltransferase from Geobacter sp. (strain M21).